The sequence spans 812 residues: Ribonucleoside-diphosphate reductase large subunit (812 aa).

The ATP-cone domain maps to Leu-12 to Lys-103. Residues Lys-16–Arg-17, Glu-22–Lys-28, Thr-64, and Asp-68 each bind ATP. GDP contacts are provided by Ser-213 and Ser-228. Cys-229 and Cys-455 are disulfide-bonded. DTTP is bound by residues Asp-237–Ile-239, Lys-254, Arg-267, and Cys-274–Gly-275. GDP is bound at residue Asn-438. Asn-438 functions as the Proton acceptor in the catalytic mechanism. The active-site Cysteine radical intermediate is the Cys-440. GDP-binding positions include Glu-442 and Thr-615–Thr-618. The active-site Proton acceptor is Glu-442. A Phosphothreonine modification is found at Thr-778. Ser-782 bears the Phosphoserine mark. The residue at position 786 (Tyr-786) is a Phosphotyrosine.

Belongs to the ribonucleoside diphosphate reductase large chain family. Heterodimer of a large and a small subunit.

The catalysed reaction is a 2'-deoxyribonucleoside 5'-diphosphate + [thioredoxin]-disulfide + H2O = a ribonucleoside 5'-diphosphate + [thioredoxin]-dithiol. With respect to regulation, under complex allosteric control mediated by deoxynucleoside triphosphates and ATP binding to separate specificity and activation sites on the M1 subunit. The type of nucleotide bound at the specificity site determines substrate preference. It seems probable that ATP makes the enzyme reduce CDP and UDP, dGTP favors ADP reduction and dTTP favors GDP reduction. Stimulated by ATP and inhibited by dATP binding to the activity site. Functionally, provides the precursors necessary for DNA synthesis. Catalyzes the biosynthesis of deoxyribonucleotides from the corresponding ribonucleotides. The sequence is that of Ribonucleoside-diphosphate reductase large subunit (RnrL) from Drosophila melanogaster (Fruit fly).